Here is a 728-residue protein sequence, read N- to C-terminus: Ankyrin repeat protein A (728 aa).

ANK repeat units lie at residues 381–410 (INLPGLYLAINYGNADIVETIFNSLSETGY), 429–458 (NGFSGLFLAISRKDKNVVTSILNALPKLAA), 477–506 (TSSHVLYHVMANGDADMLKIVLNALPLLIR), 525–554 (YGCPGLYLAMQNGHSDIVKVILEALPSLAQ), and 573–602 (ARDTGLFMAMQRGHMNVINTIFNALPTLFN).

This sequence belongs to the Toxin_15 family.

This Escherichia coli (strain K12) protein is Ankyrin repeat protein A (arpA).